A 519-amino-acid polypeptide reads, in one-letter code: Sterile alpha motif domain-containing protein 1 (519 aa).

Over residues 1–11 (MAGPPALPPPE) the composition is skewed to pro residues. Disordered regions lie at residues 1–30 (MAGPPALPPPETAAAATTAAAASSSAASPH) and 87–232 (YKGS…PVSL). Residues 12-29 (TAAAATTAAAASSSAASP) show a composition bias toward low complexity. One can recognise an SAMD1-like winged helix (WH) domain in the interval 23–99 (SSSAASPHYQ…SISYRNAARV (77 aa)). Threonine 107 is modified (phosphothreonine). Over residues 108-133 (PPAPPRVPRGGPAAPPPTPAPPPAPV) the composition is skewed to pro residues. Low complexity predominate over residues 134-147 (AAPTRAPRAAAATA). Serine 150 is subject to Phosphoserine. Positions 157–166 (GPRAQRAAPL) are enriched in low complexity. Over residues 167–217 (AAPPPAPAAPPAAAPPAGPRRAPPPAVAAREPPAPPQQQQPPPPQPQPPPE) the composition is skewed to pro residues. Positions 218 to 230 (GGAARAGGPARPV) are enriched in low complexity. Phosphoserine is present on serine 242. Residues 261–271 (EAARGRLERTR) are compositionally biased toward basic and acidic residues. Disordered stretches follow at residues 261–381 (EAAR…PGSC) and 417–439 (PALPGADGTPFGCPPGRKEKPTD). Over residues 308–325 (KEEEDEDEDEEEEEEDNV) the composition is skewed to acidic residues. Residues 443 to 511 (WTVMDVVEYF…KVLQQGHFED (69 aa)) enclose the SAM domain.

Homopolymerize into a closed pentameric ring. Interacts (via SAM domain) with L3MBTL3 (via SAM domain); the interaction mediates L3MBTL3 binding to chromatin. Interacts (via WH domain) with KDM1A; the interaction modulates KDM1A function. As to expression, expressed to similar levels in different organs. Expressed at higher levels in bone marrow, osteoclasts and spleen. Expressed in vascular smooth muscle cells.

It is found in the nucleus. Its subcellular location is the chromosome. It localises to the secreted. Unmethylated CpG islands (CGIs)-binding protein which localizes to H3K4me3-decorated CGIs, where it acts as a transcriptional repressor. Tethers L3MBTL3 to chromatin and interacts with the KDM1A histone demethylase complex to modulate H3K4me2 and H3K4me3 levels at CGIs. Plays a role in atherogenesis by binding with LDL on cell surface and promoting LDL oxidation which leads to the formation of foam cell. The chain is Sterile alpha motif domain-containing protein 1 from Mus musculus (Mouse).